Here is a 706-residue protein sequence, read N- to C-terminus: Polyribonucleotide nucleotidyltransferase (706 aa).

2 residues coordinate Mg(2+): Asp-486 and Asp-492. Residues 552–611 enclose the KH domain; that stretch reads PRIIAMKINPEKIRDVIGKGGAVIRALTEETGTQIDIQEDGSVKIACTSMEAGELAKKRI. The 69-residue stretch at 621–689 folds into the S1 motif domain; that stretch reads GKVYEGPVIK…EKGRLRLSMK (69 aa).

The protein belongs to the polyribonucleotide nucleotidyltransferase family. Mg(2+) is required as a cofactor.

The protein resides in the cytoplasm. It carries out the reaction RNA(n+1) + phosphate = RNA(n) + a ribonucleoside 5'-diphosphate. In terms of biological role, involved in mRNA degradation. Catalyzes the phosphorolysis of single-stranded polyribonucleotides processively in the 3'- to 5'-direction. This chain is Polyribonucleotide nucleotidyltransferase, found in Thiobacillus denitrificans (strain ATCC 25259 / T1).